We begin with the raw amino-acid sequence, 324 residues long: Quinolinate synthase (324 aa).

Iminosuccinate contacts are provided by histidine 44 and serine 62. Residue cysteine 107 coordinates [4Fe-4S] cluster. Iminosuccinate-binding positions include 133–135 (YVN) and serine 150. Position 192 (cysteine 192) interacts with [4Fe-4S] cluster. Iminosuccinate-binding positions include 218–220 (HPE) and threonine 235. Cysteine 278 is a [4Fe-4S] cluster binding site.

Belongs to the quinolinate synthase family. Type 2 subfamily. The cofactor is [4Fe-4S] cluster.

It localises to the cytoplasm. It catalyses the reaction iminosuccinate + dihydroxyacetone phosphate = quinolinate + phosphate + 2 H2O + H(+). Its pathway is cofactor biosynthesis; NAD(+) biosynthesis; quinolinate from iminoaspartate: step 1/1. Catalyzes the condensation of iminoaspartate with dihydroxyacetone phosphate to form quinolinate. The protein is Quinolinate synthase of Leptospira interrogans serogroup Icterohaemorrhagiae serovar copenhageni (strain Fiocruz L1-130).